We begin with the raw amino-acid sequence, 21 residues long: Preblooming protein 2 (21 aa).

Functionally, possible mediator for cell division in the blooming process. This chain is Preblooming protein 2, found in Prorocentrum triestinum (Red tide alga).